Consider the following 396-residue polypeptide: Obg-like ATPase 1 (396 aa).

An OBG-type G domain is found at 23–283 (LKIGIVGLPN…MSAEEKQKYL (261 aa)). 32–37 (NVGKST) contacts ATP. Residues serine 36 and threonine 56 each contribute to the Mg(2+) site. Leucine 231 contacts ATP. The Nuclear export signal signature appears at 267–274 (LELKLQDM). Residues 304-387 (QLEYFFTAGP…EDGDIIFFKF (84 aa)) enclose the TGS domain.

It belongs to the TRAFAC class OBG-HflX-like GTPase superfamily. OBG GTPase family. YchF/OLA1 subfamily. Monomer. It depends on Mg(2+) as a cofactor.

Its subcellular location is the cytoplasm. The protein resides in the nucleus. It is found in the nucleolus. Hydrolyzes ATP, and can also hydrolyze GTP with lower efficiency. Has lower affinity for GTP. This Gallus gallus (Chicken) protein is Obg-like ATPase 1.